We begin with the raw amino-acid sequence, 132 residues long: ATP synthase epsilon chain (132 aa).

This sequence belongs to the ATPase epsilon chain family. As to quaternary structure, F-type ATPases have 2 components, CF(1) - the catalytic core - and CF(0) - the membrane proton channel. CF(1) has five subunits: alpha(3), beta(3), gamma(1), delta(1), epsilon(1). CF(0) has three main subunits: a, b and c.

The protein localises to the cell inner membrane. In terms of biological role, produces ATP from ADP in the presence of a proton gradient across the membrane. This is ATP synthase epsilon chain from Cereibacter sphaeroides (strain ATCC 17025 / ATH 2.4.3) (Rhodobacter sphaeroides).